We begin with the raw amino-acid sequence, 398 residues long: MNIYEYQAMALLNERGVSVVPGYMAANVEEAVKAAEQLSSPPYVIKSQILAGGRGKGYFRESPKEGGGVRLVSDIAAVKKQAESMLGRHLVTAQTDDQGIPVEKLLITEAVSIAREFYLSLLVDRQTGRVTFVASPEGGMDIETVAKEKPEAIHRIAIDPATGFQPHHGRMIGFALGLSGDVFKQGIKLAASLYKAFTTSDMSLLEINPLVETNDGKLLPVDAKISFDDNALFRHPDIAALGEAGASDPLEQEARQAGLSYIKLDGSIGCMVNGAGLAMGTMDIIQLHGEMPANFLDVGGGASKEKVAAAFRIILSDPSVKGILVNIFGGIMRCDILAEGIIAAARELDITVPLVVRLEGNNVNEGKAALVSSGLPIITASDLGDAAQKIVAAIRQTA.

The 245-residue stretch at 9–253 folds into the ATP-grasp domain; the sequence is MALLNERGVS…AGASDPLEQE (245 aa). ATP is bound by residues lysine 46, 53–55, valine 111, and glutamate 116; that span reads GRG. Residues asparagine 208 and aspartate 222 each coordinate Mg(2+). Residues asparagine 273 and 330-332 each bind substrate; that span reads GIM.

Belongs to the succinate/malate CoA ligase beta subunit family. As to quaternary structure, heterotetramer of two alpha and two beta subunits. Requires Mg(2+) as cofactor.

The enzyme catalyses succinate + ATP + CoA = succinyl-CoA + ADP + phosphate. The catalysed reaction is GTP + succinate + CoA = succinyl-CoA + GDP + phosphate. Its pathway is carbohydrate metabolism; tricarboxylic acid cycle; succinate from succinyl-CoA (ligase route): step 1/1. Functionally, succinyl-CoA synthetase functions in the citric acid cycle (TCA), coupling the hydrolysis of succinyl-CoA to the synthesis of either ATP or GTP and thus represents the only step of substrate-level phosphorylation in the TCA. The beta subunit provides nucleotide specificity of the enzyme and binds the substrate succinate, while the binding sites for coenzyme A and phosphate are found in the alpha subunit. This is Succinate--CoA ligase [ADP-forming] subunit beta from Zymomonas mobilis subsp. mobilis (strain ATCC 31821 / ZM4 / CP4).